The primary structure comprises 826 residues: Ubiquitin carboxyl-terminal hydrolase 16 (826 aa).

The UBP-type zinc finger occupies 22–142 (PMCRHIRKGL…QVVDYVRKQA (121 aa)). Cys24, His26, Cys48, Cys51, Cys74, Cys77, Cys82, His90, His94, His103, Cys116, and Cys119 together coordinate Zn(2+). Lys140 is covalently cross-linked (Glycyl lysine isopeptide (Lys-Gly) (interchain with G-Cter in SUMO2)). Residues 146 to 190 (TPKPAEKDNGNIELENKKLEKESKNEQEREKKENMAKENPPMNSP) form a disordered region. The segment covering 149–181 (PAEKDNGNIELENKKLEKESKNEQEREKKENMA) has biased composition (basic and acidic residues). Ser189 bears the Phosphoserine mark. A USP domain is found at 196–825 (KGLSNLGNTC…QAYLLFYERI (630 aa)). Cys205 acts as the Nucleophile in catalysis. Basic and acidic residues predominate over residues 394–408 (SGKKSVNDKNLKKTM). The segment at 394-460 (SGKKSVNDKN…AKNQRRQQKI (67 aa)) is disordered. A compositionally biased stretch (acidic residues) spans 409 to 420 (EDEDQDSEEEKD). Phosphoserine is present on Ser415. Basic and acidic residues predominate over residues 421–430 (NDSYIKERSD). Over residues 438–458 (HLQKKAKKQAKKQAKNQRRQQ) the composition is skewed to basic residues. Residue Ser552 is modified to Phosphoserine. A Phosphothreonine modification is found at Thr557. His761 acts as the Proton acceptor in catalysis.

It belongs to the peptidase C19 family. USP16 subfamily. As to quaternary structure, homotetramer. Associates with late pre-40S ribosomes. Interacts with CEP78; promoting deubiquitination of tektins. In terms of processing, phosphorylated at the onset of mitosis and dephosphorylated during the metaphase/anaphase transition. Phosphorylation by AURKB enhances the deubiquitinase activity.

It is found in the nucleus. It carries out the reaction Thiol-dependent hydrolysis of ester, thioester, amide, peptide and isopeptide bonds formed by the C-terminal Gly of ubiquitin (a 76-residue protein attached to proteins as an intracellular targeting signal).. Functionally, specifically deubiquitinates 'Lys-120' of histone H2A (H2AK119Ub), a specific tag for epigenetic transcriptional repression, thereby acting as a coactivator. Deubiquitination of histone H2A is a prerequisite for subsequent phosphorylation at 'Ser-11' of histone H3 (H3S10ph), and is required for chromosome segregation when cells enter into mitosis. In resting B- and T-lymphocytes, phosphorylation by AURKB leads to enhance its activity, thereby maintaining transcription in resting lymphocytes. Regulates Hox gene expression via histone H2A deubiquitination. Prefers nucleosomal substrates. Does not deubiquitinate histone H2B. Also deubiquitinates non-histone proteins, such as ribosomal protein RPS27A: deubiquitination of monoubiquitinated RPS27A promotes maturation of the 40S ribosomal subunit. Also mediates deubiquitination of tektin proteins (TEKT1, TEKT2, TEK3, TEKT4 and TEKT5), promoting their stability. This is Ubiquitin carboxyl-terminal hydrolase 16 from Macaca fascicularis (Crab-eating macaque).